We begin with the raw amino-acid sequence, 760 residues long: Protein HEADING DATE 3B (760 aa).

Composition is skewed to gly residues over residues 1 to 12 and 60 to 70; these read MATRGGGGGGGG and SGGGGGGGVGG. 4 disordered regions span residues 1-120, 144-169, 236-262, and 285-346; these read MATR…KINK, SRSTAEAPQRRAENTIKSSSGKRLAD, VKSRTPLKDKEMEAAQTSKNVEVEKSS, and TGII…IEET. Over residues 71 to 87 the composition is skewed to low complexity; sequence SPAHSTSAASQSQSQSQ. Residues 94–107 show a composition bias toward polar residues; that stretch reads SLFQPFNVPSNRPG. Residues 108 to 120 show a composition bias toward basic and acidic residues; it reads HSTEKINSDKINK. Residues 236–248 are compositionally biased toward basic and acidic residues; sequence VKSRTPLKDKEME. The short motif at 349–355 is the Nuclear localization signal element; the sequence is KRKRLLE. 2 disordered regions span residues 485-543 and 707-760; these read LQQP…GVQL and FPTV…QRDD. Polar residues-rich tracts occupy residues 511 to 522, 531 to 543, and 707 to 730; these read QRDQAATNGVSK, ASDNKQNNWGVQL, and FPTVSAQNNQPQPSYSSRDNQTNV.

As to expression, expressed in mesophyll cells of young leaves, anthers, stigmas and the top of lemmas.

It localises to the nucleus. Its function is as follows. Involved in the regulation of flowering time under short day (SD) and long day (LD) conditions. Functions as a floral promoter by negatively regulating GHD7, a repressor of the photoperiodic control of flowering. Acts as a floral activator in the LD photoperiodic pathway. Involved in blue light-induced activation of EHD1 expression to promote flowering under SD conditions. This chain is Protein HEADING DATE 3B (HD3B), found in Oryza sativa subsp. japonica (Rice).